The sequence spans 195 residues: Probable GTP-binding protein EngB (195 aa).

Residues 22–195 form the EngB-type G domain; sequence QLPEIALAGR…WSALSRYIKR (174 aa). GTP contacts are provided by residues 30–37, 57–61, 75–78, 142–145, and 174–176; these read GRSNVGKS, GKTQT, DVPG, TKLD, and FSA. 2 residues coordinate Mg(2+): Ser-37 and Thr-59.

Belongs to the TRAFAC class TrmE-Era-EngA-EngB-Septin-like GTPase superfamily. EngB GTPase family. Requires Mg(2+) as cofactor.

Functionally, necessary for normal cell division and for the maintenance of normal septation. In Oceanobacillus iheyensis (strain DSM 14371 / CIP 107618 / JCM 11309 / KCTC 3954 / HTE831), this protein is Probable GTP-binding protein EngB.